The chain runs to 410 residues: Neuroserpin (410 aa).

A signal peptide spans 1-16 (MAFLGLFSLLVLQSMA). N-linked (GlcNAc...) asparagine glycans are attached at residues Asn-157, Asn-321, and Asn-401. Ser-403 carries O-linked (Xyl...) (chondroitin sulfate) serine glycosylation.

This sequence belongs to the serpin family. Monomer. Has a tendency to form large polymers already at 41 and 45 degrees Celsius (in vitro). Detected in brain cortex and hippocampus pyramidal neurons (at protein level). Detected in cerebrospinal fluid (at protein level). Predominantly expressed in the brain.

The protein resides in the secreted. It is found in the cytoplasmic vesicle. It localises to the secretory vesicle lumen. Its subcellular location is the perikaryon. In terms of biological role, serine protease inhibitor that inhibits plasminogen activators and plasmin but not thrombin. May be involved in the formation or reorganization of synaptic connections as well as for synaptic plasticity in the adult nervous system. May protect neurons from cell damage by tissue-type plasminogen activator. The sequence is that of Neuroserpin (SERPINI1) from Homo sapiens (Human).